The chain runs to 205 residues: UPF0316 protein Cthe_2213 (205 aa).

The next 3 helical transmembrane spans lie at 15 to 37, 44 to 64, and 70 to 90; these read LPLL…IIFV, LAPV…SQIM, and FVCY…GIII.

Belongs to the UPF0316 family.

The protein resides in the cell membrane. The protein is UPF0316 protein Cthe_2213 of Acetivibrio thermocellus (strain ATCC 27405 / DSM 1237 / JCM 9322 / NBRC 103400 / NCIMB 10682 / NRRL B-4536 / VPI 7372) (Clostridium thermocellum).